A 274-amino-acid polypeptide reads, in one-letter code: D-aminoacyl-tRNA deacylase (274 aa).

Belongs to the DtdA deacylase family. As to quaternary structure, monomer. It depends on Zn(2+) as a cofactor.

It carries out the reaction a D-aminoacyl-tRNA + H2O = a tRNA + a D-alpha-amino acid + H(+). It catalyses the reaction glycyl-tRNA(Ala) + H2O = tRNA(Ala) + glycine + H(+). Its function is as follows. D-aminoacyl-tRNA deacylase with broad substrate specificity. By recycling D-aminoacyl-tRNA to D-amino acids and free tRNA molecules, this enzyme counteracts the toxicity associated with the formation of D-aminoacyl-tRNA entities in vivo. The polypeptide is D-aminoacyl-tRNA deacylase (Pyrococcus horikoshii (strain ATCC 700860 / DSM 12428 / JCM 9974 / NBRC 100139 / OT-3)).